The following is a 462-amino-acid chain: tRNA modification GTPase MnmE (462 aa).

Residues arginine 23, glutamate 86, and lysine 125 each coordinate (6S)-5-formyl-5,6,7,8-tetrahydrofolate. Positions 221–384 constitute a TrmE-type G domain; it reads GIPVAIVGEP…LKNQLLSFVN (164 aa). Asparagine 231 lines the K(+) pocket. Residues 231–236, 250–256, and 275–278 each bind GTP; these read NVGKST, SEIAGTT, and DTAG. Serine 235 is a Mg(2+) binding site. K(+) contacts are provided by serine 250, isoleucine 252, and threonine 255. Residue threonine 256 participates in Mg(2+) binding. Lysine 462 is a (6S)-5-formyl-5,6,7,8-tetrahydrofolate binding site.

The protein belongs to the TRAFAC class TrmE-Era-EngA-EngB-Septin-like GTPase superfamily. TrmE GTPase family. Homodimer. Heterotetramer of two MnmE and two MnmG subunits. It depends on K(+) as a cofactor.

The protein localises to the cytoplasm. Functionally, exhibits a very high intrinsic GTPase hydrolysis rate. Involved in the addition of a carboxymethylaminomethyl (cmnm) group at the wobble position (U34) of certain tRNAs, forming tRNA-cmnm(5)s(2)U34. In Flavobacterium psychrophilum (strain ATCC 49511 / DSM 21280 / CIP 103535 / JIP02/86), this protein is tRNA modification GTPase MnmE.